Consider the following 274-residue polypeptide: Undecaprenyl-diphosphatase (274 aa).

7 consecutive transmembrane segments (helical) span residues 21-39 (FLPI…LLGF), 44-64 (AQVF…LVYW), 85-105 (FNLA…GKAI), 109-129 (LFTP…ILWA), 185-205 (ATDF…VYSL), 214-234 (VADL…AWLC), and 247-267 (FVPF…TAST).

Belongs to the UppP family.

The protein resides in the cell inner membrane. The enzyme catalyses di-trans,octa-cis-undecaprenyl diphosphate + H2O = di-trans,octa-cis-undecaprenyl phosphate + phosphate + H(+). In terms of biological role, catalyzes the dephosphorylation of undecaprenyl diphosphate (UPP). Confers resistance to bacitracin. This is Undecaprenyl-diphosphatase from Verminephrobacter eiseniae (strain EF01-2).